The following is a 106-amino-acid chain: UPF0145 protein BF0270 (106 aa).

It belongs to the UPF0145 family.

This is UPF0145 protein BF0270 from Bacteroides fragilis (strain YCH46).